The primary structure comprises 119 residues: Ribonuclease P protein component (119 aa).

Belongs to the RnpA family. Consists of a catalytic RNA component (M1 or rnpB) and a protein subunit.

It carries out the reaction Endonucleolytic cleavage of RNA, removing 5'-extranucleotides from tRNA precursor.. In terms of biological role, RNaseP catalyzes the removal of the 5'-leader sequence from pre-tRNA to produce the mature 5'-terminus. It can also cleave other RNA substrates such as 4.5S RNA. The protein component plays an auxiliary but essential role in vivo by binding to the 5'-leader sequence and broadening the substrate specificity of the ribozyme. The polypeptide is Ribonuclease P protein component (Listeria monocytogenes serotype 4b (strain CLIP80459)).